The chain runs to 42 residues: Aryl-alcohol dehydrogenase (42 aa).

The protein belongs to the zinc-containing alcohol dehydrogenase family. Homodimer. Zn(2+) serves as cofactor.

It catalyses the reaction an aromatic primary alcohol + NAD(+) = an aromatic aldehyde + NADH + H(+). Oxidizes primary alcohols with an aromatic or cyclohex-1-ene ring. It is highly specific for benzyl alcohol. The protein is Aryl-alcohol dehydrogenase of Acinetobacter guillouiae (Acinetobacter genomosp. 11).